The primary structure comprises 342 residues: UHRF1-like protein (342 aa).

The tract at residues 41 to 149 is disordered; the sequence is SEATTLATPS…SHPGSEEEDI (109 aa). The segment covering 42–59 has biased composition (polar residues); it reads EATTLATPSNLKTAGNQR. A compositionally biased stretch (basic and acidic residues) spans 74-90; that stretch reads NRSDSPRKRPTKDREDL. Positions 115–141 are enriched in polar residues; that stretch reads TREQVTFNSDRDTPNTPSRQIKSTHSH. The region spanning 168 to 322 is the YDG domain; sequence GHIPGIGVGK…LMVCRYAFKR (155 aa). Aspartate 218 is a DNA binding site. The disordered stretch occupies residues 236–257; the sequence is KGTKQNPKNLRTAPQTSHQSFD. Polar residues predominate over residues 238 to 257; that stretch reads TKQNPKNLRTAPQTSHQSFD.

It localises to the nucleus. Functionally, involved in the maintenance of DNA methylation. Binds hemimethylated DNA. This is UHRF1-like protein from Cryptococcus neoformans var. grubii serotype A (strain H99 / ATCC 208821 / CBS 10515 / FGSC 9487) (Filobasidiella neoformans var. grubii).